The following is a 418-amino-acid chain: Ankyrin repeat domain-containing protein 61 (418 aa).

ANK repeat units lie at residues 27–57 (ALHSKLYEAIMREDCTTIEVLLRNHPVNQPI), 75–104 (ESIIPIHLAAKYHKAQSLLCLLRHGADPEV), 132–161 (NRTHRILTDIQNSSITCLRILCAHGAQVNT), 167–196 (NKRSPLHLAIAYGCYPVLSILTQNGADVNA), 200–229 (ASMTPLHMAANMLNKEMMETLIAYGANVNC), 234–273 (TGNTPLKLAVCTASSKAGRLLGAGVSCIRLLLTHGAKVNA), 277–306 (KGQTAIHEACFGGREAIINLLLEFEANVNI), and 310–343 (NGESPIYMYLQRSCNVRDTALLARLLYHTYPLRM).

The sequence is that of Ankyrin repeat domain-containing protein 61 (ANKRD61) from Homo sapiens (Human).